Here is a 21-residue protein sequence, read N- to C-terminus: Cupiennin-6b (21 aa).

Position 21 is a serine amide (serine 21).

As to expression, expressed by the venom gland.

Its subcellular location is the secreted. This is Cupiennin-6b from Cupiennius salei (American wandering spider).